Here is a 97-residue protein sequence, read N- to C-terminus: Small ribosomal subunit protein bS21 (97 aa).

The tract at residues 37–97 is disordered; it reads EKPSVRKARE…APASSPTTTA (61 aa). Low complexity predominate over residues 76–97; it reads RAVAPRRPAAAPAPASSPTTTA.

Belongs to the bacterial ribosomal protein bS21 family.

The polypeptide is Small ribosomal subunit protein bS21 (Methylobacterium sp. (strain 4-46)).